The sequence spans 189 residues: Thermostable direct hemolysin-related (189 aa).

Positions 1–24 (MKYRYFAKKSFLFISMLAAFKTFA) are cleaved as a signal peptide. The cysteines at positions 175 and 185 are disulfide-linked.

The protein belongs to the TDH hemolysin family. As to quaternary structure, homodimer.

In terms of biological role, bacterial hemolysins are exotoxins that attack blood cell membranes and cause cell rupture by mechanisms not clearly defined. The chain is Thermostable direct hemolysin-related (tdh3) from Vibrio parahaemolyticus.